A 112-amino-acid chain; its full sequence is uncharacterized protein (112 aa).

The protein localises to the plastid. The protein resides in the chloroplast. This is an uncharacterized protein from Chlamydomonas reinhardtii (Chlamydomonas smithii).